We begin with the raw amino-acid sequence, 131 residues long: Rhodopsin (131 aa).

Over 1 to 16 (CGIDYYTRAPGYNNES) the chain is Extracellular. N14 carries N-linked (GlcNAc...) asparagine glycosylation. The helical transmembrane segment at 17–38 (FVIYMFIVHFLIPLFIISFCYG) threads the bilayer. The Cytoplasmic segment spans residues 39-66 (NLLCAVKAAAAAQEESETTQRAEREVTR). Residues 67–88 (MVIMMVISYLVSWVPYASVAWY) form a helical membrane-spanning segment. The Extracellular portion of the chain corresponds to 89–100 (IFSNQGSEFGPV). A helical membrane pass occupies residues 101–122 (FMTIPAFFAKSSALYNPLIYVL). K110 is modified (N6-(retinylidene)lysine). The Cytoplasmic portion of the chain corresponds to 123–131 (MNKQFRHCM).

This sequence belongs to the G-protein coupled receptor 1 family. Opsin subfamily. In terms of processing, phosphorylated on some or all of the serine and threonine residues present in the C-terminal region. Contains one covalently linked retinal chromophore.

The protein resides in the membrane. The protein localises to the cell projection. It is found in the cilium. It localises to the photoreceptor outer segment. In terms of biological role, photoreceptor required for image-forming vision at low light intensity. While most salt water fish species use retinal as chromophore, most freshwater fish use 3-dehydroretinal, or a mixture of retinal and 3-dehydroretinal. Light-induced isomerization of 11-cis to all-trans retinal triggers a conformational change that activates signaling via G-proteins. Subsequent receptor phosphorylation mediates displacement of the bound G-protein alpha subunit by arrestin and terminates signaling. The protein is Rhodopsin (rho) of Coregonus autumnalis (Arctic cisco).